Reading from the N-terminus, the 353-residue chain is MKMFITMSMCLSVIACFYAGVGTGETLVPALIIMGDSVVDAGNNNHRITLVKANFPPYGRDFVAHSATGRFSNGKLATDFTAENLGFTSYPVAYLSQEANETNLLTGANFASGASGFDDATAIFYNAITLSQQLKNYKEYQNKVTNIVGKERANEIFSGAIHLLSTGSSDFLQSYYINPILNRIFTPDQYSDHLLRSYSTFVQNLYGLGARRIGVTTLPPLGCLPAAITLFGGVGNNMCVERLNQDAVSFNTKLNNTSINLTNNLPGLKLVVFDIYNPLLNMVINPVEYGFFESRRACCGTGTMETSFLCNALSVGTCSNATNYVFWDGFHPSEAANRVIANNLLVQGIPLIS.

The first 24 residues, 1-24 (MKMFITMSMCLSVIACFYAGVGTG), serve as a signal peptide directing secretion. The active-site Nucleophile is the Ser37. N-linked (GlcNAc...) asparagine glycosylation is found at Asn100, Asn255, Asn256, Asn260, and Asn320. Residues Asp328 and His331 contribute to the active site.

The protein belongs to the 'GDSL' lipolytic enzyme family.

It is found in the secreted. This Arabidopsis thaliana (Mouse-ear cress) protein is GDSL esterase/lipase At5g03810.